A 236-amino-acid chain; its full sequence is 4-hydroxy-tetrahydrodipicolinate reductase (236 aa).

NAD(+) contacts are provided by residues 11–16 (GASGRM), 92–94 (GTT), and 116–119 (GSNF). Histidine 148 (proton donor/acceptor) is an active-site residue. Histidine 149 contributes to the (S)-2,3,4,5-tetrahydrodipicolinate binding site. Lysine 152 acts as the Proton donor in catalysis. 158–159 (GS) provides a ligand contact to (S)-2,3,4,5-tetrahydrodipicolinate.

It belongs to the DapB family.

The protein resides in the cytoplasm. It carries out the reaction (S)-2,3,4,5-tetrahydrodipicolinate + NAD(+) + H2O = (2S,4S)-4-hydroxy-2,3,4,5-tetrahydrodipicolinate + NADH + H(+). The enzyme catalyses (S)-2,3,4,5-tetrahydrodipicolinate + NADP(+) + H2O = (2S,4S)-4-hydroxy-2,3,4,5-tetrahydrodipicolinate + NADPH + H(+). Its pathway is amino-acid biosynthesis; L-lysine biosynthesis via DAP pathway; (S)-tetrahydrodipicolinate from L-aspartate: step 4/4. Its function is as follows. Catalyzes the conversion of 4-hydroxy-tetrahydrodipicolinate (HTPA) to tetrahydrodipicolinate. The polypeptide is 4-hydroxy-tetrahydrodipicolinate reductase (Xylella fastidiosa (strain M23)).